Consider the following 290-residue polypeptide: Pirin (290 aa).

H56, H58, H101, and E103 together coordinate Fe cation.

It belongs to the pirin family. As to quaternary structure, may interact with NF1/CTF1. Interacts with BCL3. Identified in a complex comprised of PIR, BLC3, NFKB1 and target DNA. Requires Fe cation as cofactor. As to expression, highly expressed in a subset of melanomas. Detected at very low levels in most tissues (at protein level). Expressed in all tissues, with highest level of expression in heart and liver.

It is found in the nucleus. The protein localises to the cytoplasm. The enzyme catalyses quercetin + O2 = 2-(3,4-dihydroxybenzoyloxy)-4,6-dihydroxybenzoate + CO. It functions in the pathway flavonoid metabolism; quercetin degradation. Its activity is regulated as follows. Inhibited by kojic acid, sodium diethyldithiocarbamate and 1,10-phenanthroline monohydrochloride. In terms of biological role, transcriptional coregulator of NF-kappa-B which facilitates binding of NF-kappa-B proteins to target kappa-B genes in a redox-state-dependent manner. May be required for efficient terminal myeloid maturation of hematopoietic cells. Has quercetin 2,3-dioxygenase activity (in vitro). The polypeptide is Pirin (PIR) (Homo sapiens (Human)).